The following is a 497-amino-acid chain: Putative glucuronosyltransferase PGSIP8 (497 aa).

Residues 3 to 23 (LQRGFVFLSLVLSFMIIETTA) traverse the membrane as a helical segment. Positions 165 and 167 each coordinate Mn(2+). Transmembrane regions (helical) follow at residues 319-339 (YSAE…IIVV), 365-385 (GFKL…FFTI), 388-408 (TIHP…LSSI), 418-438 (LPVL…AFPW), and 442-462 (GVVR…FVWV).

Belongs to the glycosyltransferase 8 family. Glycogenin subfamily. Requires Mn(2+) as cofactor.

It is found in the membrane. The sequence is that of Putative glucuronosyltransferase PGSIP8 (PGSIP8) from Arabidopsis thaliana (Mouse-ear cress).